The following is a 675-amino-acid chain: Heat shock 70 kDa protein 12A (675 aa).

The segment covering 1–13 has biased composition (basic and acidic residues); it reads MADKEAGGSDGPR. The disordered stretch occupies residues 1–45; that stretch reads MADKEAGGSDGPRETAPTSAYSSPARSLGDTGITPLSPSHIVNDT. At Ala2 the chain carries N-acetylalanine. 2 stretches are compositionally biased toward polar residues: residues 16–25 and 34–45; these read APTSAYSSPA and TPLSPSHIVNDT.

The protein belongs to the heat shock protein 70 family. Interacts with SORL1 (via cytosolic C-terminus); this interaction affects SORL1 internalization and subcellular localization. Widely expressed with highest levels in brain, kidney and muscle.

It is found in the cytoplasm. It localises to the nucleus. Functionally, adapter protein for SORL1, but not SORT1. Delays SORL1 internalization and affects SORL1 subcellular localization. This Homo sapiens (Human) protein is Heat shock 70 kDa protein 12A (HSPA12A).